We begin with the raw amino-acid sequence, 455 residues long: Golgi pH regulator (455 aa).

Helical transmembrane passes span 5–25 (ADSV…WLFF) and 46–66 (VTFA…LGLL). N67 carries N-linked (GlcNAc...) asparagine glycosylation. The next 3 helical transmembrane spans lie at 79 to 99 (LCVI…YFVV), 111 to 131 (LFSC…GDPF), and 150 to 170 (VGVI…VNCP). N-linked (GlcNAc...) asparagine glycosylation is present at N180. 4 helical membrane-spanning segments follow: residues 290–310 (GYFF…NIVF), 343–363 (ISFI…LITL), 378–398 (VIVL…VLLI), and 425–445 (WFDV…YLAH).

This sequence belongs to the Golgi pH regulator (TC 1.A.38) family. Homotrimer.

The protein localises to the golgi apparatus membrane. It catalyses the reaction iodide(out) = iodide(in). It carries out the reaction chloride(in) = chloride(out). The enzyme catalyses bromide(in) = bromide(out). The catalysed reaction is fluoride(in) = fluoride(out). Voltage-gated channel that enables the transfer of anions such as iodide, chloride, bromide and fluoride which may function in counter-ion conductance and participates in Golgi acidification. This is Golgi pH regulator (gpr89-b) from Xenopus laevis (African clawed frog).